Reading from the N-terminus, the 289-residue chain is Probable acetolactate synthase small subunit (289 aa).

Position 34 is a phosphoserine (Ser34). Residues 72 to 149 (VFNCLVQNEP…AVLDYTGTSM (78 aa)) form the ACT domain.

The protein belongs to the acetolactate synthase small subunit family.

Its subcellular location is the cytoplasm. Its pathway is amino-acid biosynthesis; L-isoleucine biosynthesis; L-isoleucine from 2-oxobutanoate: step 1/4. The protein operates within amino-acid biosynthesis; L-valine biosynthesis; L-valine from pyruvate: step 1/4. Functionally, stimulates activity of the acetolactate synthase catalytic subunit ilv1. In Schizosaccharomyces pombe (strain 972 / ATCC 24843) (Fission yeast), this protein is Probable acetolactate synthase small subunit.